Reading from the N-terminus, the 430-residue chain is HCDGVNLTCEACQEPGGLVVPPTDAPVSSTTPYVEDTPEPPLHNFYCSKLLDLVFLLDGSYRLSEAEFEVLKAFVVGTMERLHISQKRIRVAVVEYHDGSHAYLELRARKRPSELRRIASQIKYVGSQLASTSEVLKYTLFQIFGKIDRPEASRVILLLTASQEPQRMARYFTRYLQGFKKKKVILIPVGIGPHANLKQIRLIEKQAPENKAFLLSGVDELEQRRDEIINYLCDLAPEAPAPSKPPQVAHITVSPGISGVSSPGPKRKSLVLDVVFVLEASDEVGEANFNKSKEFLEEVIQRMDVSPAGTHIAVLQYSYTVNVEYTFKEAQSKEDVLRHVREIRYQGGNRTNTGQALQYLSEHSFSPSQGDREQAPNLVYMVTGNPASDEIRRLPGDIQVVPIGVGSRANLQELERISRPITPIFIQDFE.

A glycan (N-linked (GlcNAc...) asparagine) is linked at Asn6. An intrachain disulfide couples Cys9 to Cys12. O-linked (GalNAc...) threonine glycosylation is found at Thr23, Thr30, and Thr31. A disulfide bond links Cys47 and Cys233. Positions 52 to 228 (DLVFLLDGSY…DELEQRRDEI (177 aa)) constitute a VWFA 1; binding site for platelet glycoprotein Ib domain. A glycan (O-linked (GalNAc...) threonine) is linked at Thr252. A glycan (O-linked (GalNAc...) serine) is linked at Ser261. A VWFA 2 domain is found at 273 to 430 (DVVFVLEASD…ITPIFIQDFE (158 aa)). Residues Asn290 and Asn349 are each glycosylated (N-linked (GlcNAc...) asparagine).

As to quaternary structure, multimeric. Interacts with F8. N- and O-glycosylated. Plasma.

The protein localises to the secreted. Its subcellular location is the extracellular space. The protein resides in the extracellular matrix. Functionally, important in the maintenance of hemostasis, it promotes adhesion of platelets to the sites of vascular injury by forming a molecular bridge between sub-endothelial collagen matrix and platelet-surface receptor complex GPIb-IX-V. Also acts as a chaperone for coagulation factor VIII, delivering it to the site of injury, stabilizing its heterodimeric structure and protecting it from premature clearance from plasma. In Rattus norvegicus (Rat), this protein is von Willebrand factor.